The chain runs to 547 residues: Putative nitric oxide synthase (547 aa).

The segment covering 24–40 (QLAPNPSSFSPTRAAST) has biased composition (low complexity). Disordered regions lie at residues 24 to 57 (QLAP…SRGD) and 72 to 91 (VLAP…RKAL). Residues 81 to 91 (RRRRREKRKAL) show a composition bias toward basic residues. One can recognise a CP-type G domain in the interval 167–343 (ADQLRDKLSY…LYDTPGVHLH (177 aa)).

The protein belongs to the TRAFAC class YlqF/YawG GTPase family. NOA1 subfamily.

It catalyses the reaction 2 L-arginine + 3 NADPH + 4 O2 + H(+) = 2 L-citrulline + 2 nitric oxide + 3 NADP(+) + 4 H2O. Produces nitric oxide (NO) which is a messenger molecule involved in hormonal signaling and defense responses in plant. In Oryza sativa subsp. japonica (Rice), this protein is Putative nitric oxide synthase.